The following is a 603-amino-acid chain: Insulin-like growth factor-binding protein complex acid labile subunit (603 aa).

An N-terminal signal peptide occupies residues 1 to 23; sequence MALRTGSPALVVLLAFWVALGPC. Residues 32–74 enclose the LRRNT domain; sequence ASADAEGPQCPVTCTCSYDDYTDELSVFCSSRNLTQLPDGIPV. Disulfide bonds link C41-C47 and C45-C60. N-linked (GlcNAc...) asparagine glycans are attached at residues N64, N85, and N96. LRR repeat units follow at residues 75-96, 99-120, 123-144, 147-168, 171-192, 195-216, 219-240, 243-264, 267-288, 291-312, 315-336, 339-360, 363-384, 387-408, 411-432, 435-456, 459-480, 483-504, and 507-528; these read STRALWLDGNNLSSIPSAAFQN, SLDFLNLQGSWLRSLEPQALLG, NLYHLHLERNLLRSLAAGLFRH, SLASLSLGNNLLGRLEEGLFRG, HLWDLNLGWNSLVVLPDTVFQG, NLHELVLAGNKLTYLQPALLCG, ELRELDLSRNALRSVKANVFIH, RLQKLYLDRNLITAVAPRAFLG, ALRWLDLSHNRVAGLLEDTFPG, GLHVLRLAHNAITSLRPRTFKD, FLEELQLGHNRIRQLGEKTFEG, QLEVLTLNDNQIHEVKVGAFFG, NVAVMNLSGNCLRSLPEHVFQG, RLHSLHLEHSCLGRIRLHTFAG, GLRRLFLRDNSISSIEEQSLAG, ELLELDLTANQLTHLPRQLFQG, QLEYLLLSNNQLTMLSEDVLGP, RAFWLDLSHNRLETPAEGLFSS, and RLRYLNLRNNSLQTFVPQPGLE. An N-linked (GlcNAc...) asparagine glycan is attached at N368. The N-linked (GlcNAc...) asparagine glycan is linked to N515. The region spanning 535 to 603 is the LRRCT domain; the sequence is NPWDCSCPLK…DISETLFVHC (69 aa). 3 disulfide bridges follow: C539–C581, C541–C603, and C565–C570. 2 N-linked (GlcNAc...) asparagine glycosylation sites follow: N578 and N586.

In terms of assembly, forms a ternary complex with IGF1 and IGFBP3.

It is found in the secreted. The protein localises to the extracellular space. In terms of biological role, may have an important role in regulating the access of circulating IGFs to the tissues. This chain is Insulin-like growth factor-binding protein complex acid labile subunit (Igfals), found in Mus musculus (Mouse).